Consider the following 571-residue polypeptide: Urease subunit alpha (571 aa).

The Urease domain maps to 132–571; the sequence is GAIDTHIHFI…LPMGQKYFLF (440 aa). Residues histidine 137, histidine 139, and lysine 220 each contribute to the Ni(2+) site. Lysine 220 carries the post-translational modification N6-carboxylysine. Histidine 222 is a binding site for substrate. The Ni(2+) site is built by histidine 249 and histidine 275. The active-site Proton donor is the histidine 323. Aspartate 363 is a Ni(2+) binding site.

The protein belongs to the metallo-dependent hydrolases superfamily. Urease alpha subunit family. As to quaternary structure, heterotrimer of UreA (gamma), UreB (beta) and UreC (alpha) subunits. Three heterotrimers associate to form the active enzyme. Ni cation serves as cofactor. In terms of processing, carboxylation allows a single lysine to coordinate two nickel ions.

Its subcellular location is the cytoplasm. The enzyme catalyses urea + 2 H2O + H(+) = hydrogencarbonate + 2 NH4(+). It functions in the pathway nitrogen metabolism; urea degradation; CO(2) and NH(3) from urea (urease route): step 1/1. The polypeptide is Urease subunit alpha (Corynebacterium urealyticum (strain ATCC 43042 / DSM 7109)).